The primary structure comprises 314 residues: tRNA uridine(34) hydroxylase (314 aa).

The region spanning 140 to 234 (ARDDVILIDT…YLEETPPDES (95 aa)) is the Rhodanese domain. Cys-194 (cysteine persulfide intermediate) is an active-site residue.

Belongs to the TrhO family.

The enzyme catalyses uridine(34) in tRNA + AH2 + O2 = 5-hydroxyuridine(34) in tRNA + A + H2O. Its function is as follows. Catalyzes oxygen-dependent 5-hydroxyuridine (ho5U) modification at position 34 in tRNAs. The protein is tRNA uridine(34) hydroxylase of Acinetobacter baumannii (strain AYE).